We begin with the raw amino-acid sequence, 228 residues long: Cytochrome c oxidase subunit 2 (228 aa).

Over 1-14 (MAYPFQLGFQDATS) the chain is Mitochondrial intermembrane. The chain crosses the membrane as a helical span at residues 15–45 (PIMEELLHFHDHTLMIVFLISSLVLYIISLM). The Mitochondrial matrix portion of the chain corresponds to 46-59 (LTTKLTHTSTMDAQ). Residues 60 to 87 (EVETIWTILPAIILILIALPSLRILYMM) form a helical membrane-spanning segment. Over 88–228 (DEINNPALTV…FEKWSTSMLT (141 aa)) the chain is Mitochondrial intermembrane. 6 residues coordinate Cu cation: His-161, Cys-196, Glu-198, Cys-200, His-204, and Met-207. Position 198 (Glu-198) interacts with Mg(2+). Tyr-218 carries the phosphotyrosine modification.

The protein belongs to the cytochrome c oxidase subunit 2 family. In terms of assembly, component of the cytochrome c oxidase (complex IV, CIV), a multisubunit enzyme composed of 14 subunits. The complex is composed of a catalytic core of 3 subunits MT-CO1, MT-CO2 and MT-CO3, encoded in the mitochondrial DNA, and 11 supernumerary subunits COX4I, COX5A, COX5B, COX6A, COX6B, COX6C, COX7A, COX7B, COX7C, COX8 and NDUFA4, which are encoded in the nuclear genome. The complex exists as a monomer or a dimer and forms supercomplexes (SCs) in the inner mitochondrial membrane with NADH-ubiquinone oxidoreductase (complex I, CI) and ubiquinol-cytochrome c oxidoreductase (cytochrome b-c1 complex, complex III, CIII), resulting in different assemblies (supercomplex SCI(1)III(2)IV(1) and megacomplex MCI(2)III(2)IV(2)). Found in a complex with TMEM177, COA6, COX18, COX20, SCO1 and SCO2. Interacts with TMEM177 in a COX20-dependent manner. Interacts with COX20. Interacts with COX16. The cofactor is Cu cation.

It localises to the mitochondrion inner membrane. It catalyses the reaction 4 Fe(II)-[cytochrome c] + O2 + 8 H(+)(in) = 4 Fe(III)-[cytochrome c] + 2 H2O + 4 H(+)(out). Functionally, component of the cytochrome c oxidase, the last enzyme in the mitochondrial electron transport chain which drives oxidative phosphorylation. The respiratory chain contains 3 multisubunit complexes succinate dehydrogenase (complex II, CII), ubiquinol-cytochrome c oxidoreductase (cytochrome b-c1 complex, complex III, CIII) and cytochrome c oxidase (complex IV, CIV), that cooperate to transfer electrons derived from NADH and succinate to molecular oxygen, creating an electrochemical gradient over the inner membrane that drives transmembrane transport and the ATP synthase. Cytochrome c oxidase is the component of the respiratory chain that catalyzes the reduction of oxygen to water. Electrons originating from reduced cytochrome c in the intermembrane space (IMS) are transferred via the dinuclear copper A center (CU(A)) of subunit 2 and heme A of subunit 1 to the active site in subunit 1, a binuclear center (BNC) formed by heme A3 and copper B (CU(B)). The BNC reduces molecular oxygen to 2 water molecules using 4 electrons from cytochrome c in the IMS and 4 protons from the mitochondrial matrix. The sequence is that of Cytochrome c oxidase subunit 2 (MT-CO2) from Sus scrofa (Pig).